Reading from the N-terminus, the 351-residue chain is DNA polymerase IV (351 aa).

The UmuC domain maps to 4–185; it reads IIHIDMDCFF…LPLAKIPGVG (182 aa). The Mg(2+) site is built by Asp8 and Asp103. Residue Glu104 is part of the active site.

This sequence belongs to the DNA polymerase type-Y family. In terms of assembly, monomer. It depends on Mg(2+) as a cofactor.

Its subcellular location is the cytoplasm. It catalyses the reaction DNA(n) + a 2'-deoxyribonucleoside 5'-triphosphate = DNA(n+1) + diphosphate. In terms of biological role, poorly processive, error-prone DNA polymerase involved in untargeted mutagenesis. Copies undamaged DNA at stalled replication forks, which arise in vivo from mismatched or misaligned primer ends. These misaligned primers can be extended by PolIV. Exhibits no 3'-5' exonuclease (proofreading) activity. May be involved in translesional synthesis, in conjunction with the beta clamp from PolIII. The protein is DNA polymerase IV of Salmonella paratyphi A (strain ATCC 9150 / SARB42).